We begin with the raw amino-acid sequence, 930 residues long: Translation initiation factor IF-2 (930 aa).

Disordered stretches follow at residues 160-179 (EPVE…FTDG) and 208-301 (AKRA…AAAP). Residues 208-227 (AKRAAEEAKRTQPRAEKPAD) are compositionally biased toward basic and acidic residues. 2 stretches are compositionally biased toward basic residues: residues 263-272 (GHGHKKHHHG) and 288-301 (KRGA…AAAP). Residues 431 to 600 (TRAPVVTVMG…SLQAEVLELT (170 aa)) form the tr-type G domain. The interval 440–447 (GHVDHGKT) is G1. A GTP-binding site is contributed by 440-447 (GHVDHGKT). A G2 region spans residues 465-469 (GITQH). The G3 stretch occupies residues 486-489 (DTPG). GTP contacts are provided by residues 486 to 490 (DTPGH) and 540 to 543 (NKCD). The G4 stretch occupies residues 540-543 (NKCD). Residues 576 to 578 (SAH) are G5.

Belongs to the TRAFAC class translation factor GTPase superfamily. Classic translation factor GTPase family. IF-2 subfamily.

It localises to the cytoplasm. In terms of biological role, one of the essential components for the initiation of protein synthesis. Protects formylmethionyl-tRNA from spontaneous hydrolysis and promotes its binding to the 30S ribosomal subunits. Also involved in the hydrolysis of GTP during the formation of the 70S ribosomal complex. In Cellvibrio japonicus (strain Ueda107) (Pseudomonas fluorescens subsp. cellulosa), this protein is Translation initiation factor IF-2.